A 649-amino-acid polypeptide reads, in one-letter code: Putative calpain-like cysteine protease A (649 aa).

Residues 1 to 3 (MLT) constitute a propeptide that is removed on maturation. Disordered regions lie at residues 1 to 22 (MLTTESPTTTTTTTTTTTSSPS) and 124 to 193 (PLSN…SMPA). The region spanning 15-123 (TTTTSSPSSD…LHANGEAKWY (109 aa)) is the C2 domain. Residues 140-149 (ITNSNNKDNN) show a composition bias toward low complexity. Basic and acidic residues predominate over residues 159 to 172 (AQEKGDEDQHHSAD). 2 domain III regions span residues 458–489 (EGTYIVIPSTYDHGIEGAFHLTLFTDDKNATF) and 498–633 (EVEQ…ISLD).

The protein belongs to the peptidase C2 family. In terms of assembly, monomer. In terms of processing, undergoes autolytic cleavage between Pro-192 and Ala-193.

Its subcellular location is the cytoplasm. The protein resides in the cytosol. Its function is as follows. Has a weak caseinolytic activity. This Dictyostelium discoideum (Social amoeba) protein is Putative calpain-like cysteine protease A (cplA).